Consider the following 333-residue polypeptide: Ornithine carbamoyltransferase (333 aa).

Carbamoyl phosphate contacts are provided by residues 56-59 (STRT), Arg107, and 134-137 (HPTQ). Residues Asn167, Asp231, and 235 to 236 (SM) each bind L-ornithine. Residues 273–274 (CL) and Arg318 each bind carbamoyl phosphate.

It belongs to the aspartate/ornithine carbamoyltransferase superfamily. OTCase family.

Its subcellular location is the cytoplasm. The enzyme catalyses carbamoyl phosphate + L-ornithine = L-citrulline + phosphate + H(+). It functions in the pathway amino-acid degradation; L-arginine degradation via ADI pathway; carbamoyl phosphate from L-arginine: step 2/2. Reversibly catalyzes the transfer of the carbamoyl group from carbamoyl phosphate (CP) to the N(epsilon) atom of ornithine (ORN) to produce L-citrulline. The polypeptide is Ornithine carbamoyltransferase (Clostridium botulinum (strain Kyoto / Type A2)).